We begin with the raw amino-acid sequence, 76 residues long: Conotoxin Vc6.9 (76 aa).

The N-terminal stretch at 1–19 (MEKLTILLLVAAVLMSTQA) is a signal peptide. Positions 20–41 (LMQEQRQKAKINLFSKRKPSAE) are excised as a propeptide. 3 disulfides stabilise this stretch: C49/C63, C56/C67, and C62/C72.

This sequence belongs to the conotoxin O2 superfamily. Expressed by the venom duct.

The protein resides in the secreted. Its function is as follows. Inhibits voltage-gated ion channels. This Conus victoriae (Queen Victoria cone) protein is Conotoxin Vc6.9.